Reading from the N-terminus, the 597-residue chain is Elongation factor 4 (597 aa).

The tr-type G domain maps to 2-184 (KNIRNFSIIA…SIVEHLPAPE (183 aa)). GTP-binding positions include 14–19 (DHGKST) and 131–134 (NKID).

Belongs to the TRAFAC class translation factor GTPase superfamily. Classic translation factor GTPase family. LepA subfamily.

Its subcellular location is the cell inner membrane. It catalyses the reaction GTP + H2O = GDP + phosphate + H(+). Functionally, required for accurate and efficient protein synthesis under certain stress conditions. May act as a fidelity factor of the translation reaction, by catalyzing a one-codon backward translocation of tRNAs on improperly translocated ribosomes. Back-translocation proceeds from a post-translocation (POST) complex to a pre-translocation (PRE) complex, thus giving elongation factor G a second chance to translocate the tRNAs correctly. Binds to ribosomes in a GTP-dependent manner. The sequence is that of Elongation factor 4 from Desulfotalea psychrophila (strain LSv54 / DSM 12343).